Consider the following 125-residue polypeptide: Small ribosomal subunit protein uS12 (125 aa).

Asp-89 carries the 3-methylthioaspartic acid modification. The disordered stretch occupies residues 104–125 (LQGVKDRKQSRSKYGSKRPKKA). Residues 113 to 125 (SRSKYGSKRPKKA) show a composition bias toward basic residues.

This sequence belongs to the universal ribosomal protein uS12 family. Part of the 30S ribosomal subunit. Contacts proteins S8 and S17. May interact with IF1 in the 30S initiation complex.

Its function is as follows. With S4 and S5 plays an important role in translational accuracy. Functionally, interacts with and stabilizes bases of the 16S rRNA that are involved in tRNA selection in the A site and with the mRNA backbone. Located at the interface of the 30S and 50S subunits, it traverses the body of the 30S subunit contacting proteins on the other side and probably holding the rRNA structure together. The combined cluster of proteins S8, S12 and S17 appears to hold together the shoulder and platform of the 30S subunit. This chain is Small ribosomal subunit protein uS12, found in Leptothrix cholodnii (strain ATCC 51168 / LMG 8142 / SP-6) (Leptothrix discophora (strain SP-6)).